The chain runs to 493 residues: Cytochrome P450 monooxygenase astA (493 aa).

A helical transmembrane segment spans residues 5–25; it reads EIILLGLAALAVTYQVIVWIY. N-linked (GlcNAc...) asparagine glycosylation is found at Asn-174 and Asn-286. A heme-binding site is contributed by Cys-433.

This sequence belongs to the cytochrome P450 family. Heme is required as a cofactor.

It is found in the membrane. It carries out the reaction asperterpenoid A + reduced [NADPH--hemoprotein reductase] + O2 = asperterpenoid C + oxidized [NADPH--hemoprotein reductase] + H2O + H(+). The protein operates within secondary metabolite biosynthesis; terpenoid biosynthesis. In terms of biological role, cytochrome P450 monooxygenase; part of the gene cluster that mediates the biosynthesis of the asperterpenoids, sesterterpenes that exhibit anti-tuberculosis activity. The first step of the pathway is performed by the sesterterpene synthase astC that possesses both prenyl transferase and terpene cyclase activity, converting isopentenyl diphosphate and dimethylallyl diphosphate into geranylfarnesyl diphosphate (GFPP) and further converting GFPP into preasperterpenoid A, respectively. The cytochrome P450 monooxygenase astB then dually oxidizes preasperterpenoid A to produce asperterpenoid A along with a minor product, asperterpenoid B. Finally, the cytochrome P450 monooxygenase astA converts asperterpenoid A into asperterpenoid C. The chain is Cytochrome P450 monooxygenase astA from Talaromyces wortmannii (Penicillium wortmannii).